We begin with the raw amino-acid sequence, 498 residues long: 3-octaprenyl-4-hydroxybenzoate carboxy-lyase (498 aa).

N175 is a Mn(2+) binding site. Prenylated FMN contacts are provided by residues 178 to 180 (IYR), 192 to 194 (RWL), and 197 to 198 (RG). E241 contacts Mn(2+). The active-site Proton donor is D290.

It belongs to the UbiD family. Homohexamer. Prenylated FMN serves as cofactor. It depends on Mn(2+) as a cofactor.

The protein resides in the cell membrane. The enzyme catalyses a 4-hydroxy-3-(all-trans-polyprenyl)benzoate + H(+) = a 2-(all-trans-polyprenyl)phenol + CO2. The protein operates within cofactor biosynthesis; ubiquinone biosynthesis. In terms of biological role, catalyzes the decarboxylation of 3-octaprenyl-4-hydroxy benzoate to 2-octaprenylphenol, an intermediate step in ubiquinone biosynthesis. In Yersinia pestis bv. Antiqua (strain Antiqua), this protein is 3-octaprenyl-4-hydroxybenzoate carboxy-lyase.